The sequence spans 254 residues: 3-deoxy-manno-octulosonate cytidylyltransferase (254 aa).

The protein belongs to the KdsB family.

It is found in the cytoplasm. It carries out the reaction 3-deoxy-alpha-D-manno-oct-2-ulosonate + CTP = CMP-3-deoxy-beta-D-manno-octulosonate + diphosphate. It participates in nucleotide-sugar biosynthesis; CMP-3-deoxy-D-manno-octulosonate biosynthesis; CMP-3-deoxy-D-manno-octulosonate from 3-deoxy-D-manno-octulosonate and CTP: step 1/1. It functions in the pathway bacterial outer membrane biogenesis; lipopolysaccharide biosynthesis. Its function is as follows. Activates KDO (a required 8-carbon sugar) for incorporation into bacterial lipopolysaccharide in Gram-negative bacteria. The polypeptide is 3-deoxy-manno-octulosonate cytidylyltransferase (Haemophilus influenzae (strain PittGG)).